The chain runs to 113 residues: Stigma/stylar cysteine-rich adhesin (113 aa).

The N-terminal stretch at 1–22 (MARSSAVCFLLLLAFLIGTASA) is a signal peptide. Cystine bridges form between Cys-25–Cys-72, Cys-35–Cys-49, Cys-50–Cys-95, and Cys-70–Cys-109.

It belongs to the plant LTP family. In terms of tissue distribution, highly expressed in style and stigma, abundant in young leaves and petals, and low expression in young anthers at pollen mother cell stage with an active tapetum. Not expressed in mature leaves or in pollen grains or tubes. Found in the stylar transmitting tract epidermis and in the stylar extracellular matrix.

Acts as an adhesive agent between the pollen tube wall and the stylar transmitting tract epidermis. Binds a stylar pectin in a pH-dependent manner. Enhances activity of chemocyanin, a diffusible chemotropic factor. The chain is Stigma/stylar cysteine-rich adhesin (SCA) from Lilium longiflorum (Trumpet lily).